We begin with the raw amino-acid sequence, 158 residues long: Frataxin homolog, mitochondrial (158 aa).

This sequence belongs to the frataxin family. In terms of assembly, monomer. Oligomer.

Its subcellular location is the mitochondrion. The catalysed reaction is 4 Fe(2+) + O2 + 4 H(+) = 4 Fe(3+) + 2 H2O. Its function is as follows. Promotes the biosynthesis of heme as well as the assembly and repair of iron-sulfur clusters by delivering Fe(2+) to proteins involved in these pathways. May play a role in the protection against iron-catalyzed oxidative stress through its ability to catalyze the oxidation of Fe(2+) to Fe(3+). May be able to store large amounts of the metal in the form of a ferrihydrite mineral by oligomerization. This is Frataxin homolog, mitochondrial from Schizosaccharomyces pombe (strain 972 / ATCC 24843) (Fission yeast).